Reading from the N-terminus, the 515-residue chain is SWI/SNF-related matrix-associated actin-dependent regulator of chromatin subfamily D member 1 (515 aa).

The segment at 1 to 103 (MAARAGFQSV…SGMDQSRKRP (103 aa)) is disordered. Over residues 14–23 (GGAGASGGAG) the composition is skewed to gly residues. Residues 43–167 (APGQGLYRSP…DQTIMRKRLD (125 aa)) are interaction with ESR1, NR1H4, NR3C1, PGR and SMARCA4. Arg-68 and Arg-88 each carry asymmetric dimethylarginine. A Glycyl lysine isopeptide (Lys-Gly) (interchain with G-Cter in SUMO2) cross-link involves residue Lys-101. The tract at residues 168 to 474 (IQEALKRPIK…TMTDVVGNPE (307 aa)) is interaction with SMARCC1 and SMARCC2. The interval 180 to 515 (RKLRIFISNT…LEQALGIRNT (336 aa)) is necessary for GR/NR3C1-mediated remodeling and transcription from chromatin; required for GR/NR3C1 interaction with the BRG1/SMARCA4 complex in vivo. Thr-203 is modified (phosphothreonine). Residue Lys-223 is modified to N6-acetyllysine. The 78-residue stretch at 290–367 (YQPPQFKLDP…PQRLHALLMP (78 aa)) folds into the SWIB/MDM2 domain. The stretch at 412 to 440 (ASQQEIATLDNKIHETIETINQLKTQREF) forms a coiled coil.

Belongs to the SMARCD family. In terms of assembly, component of the multiprotein chromatin-remodeling complexes SWI/SNF: SWI/SNF-A (BAF), SWI/SNF-B (PBAF) and related complexes. The canonical complex contains a catalytic subunit (either SMARCA4/BRG1/BAF190A or SMARCA2/BRM/BAF190B), and at least SMARCE1, ACTL6A/BAF53, SMARCC1/BAF155, SMARCC2/BAF170, and SMARCB1/SNF5/BAF47. Other subunits specific to each of the complexes may also be present permitting several possible combinations developmentally and tissue specific. Component of the BAF complex, which includes at least actin (ACTB), ARID1A/BAF250A, ARID1B/BAF250B, SMARCA2/BRM, SMARCA4/BRG1/BAF190A, ACTL6A/BAF53, ACTL6B/BAF53B, SMARCE1/BAF57, SMARCC1/BAF155, SMARCC2/BAF170, SMARCB1/SNF5/INI1, and one or more SMARCD1/BAF60A, SMARCD2/BAF60B, or SMARCD3/BAF60C. In muscle cells, the BAF complex also contains DPF3. Component of neural progenitors-specific chromatin remodeling complex (npBAF complex) composed of at least, ARID1A/BAF250A or ARID1B/BAF250B, SMARCD1/BAF60A, SMARCD3/BAF60C, SMARCA2/BRM/BAF190B, SMARCA4/BRG1/BAF190A, SMARCB1/BAF47, SMARCC1/BAF155, SMARCE1/BAF57, SMARCC2/BAF170, PHF10/BAF45A, ACTL6A/BAF53A and actin. Component of neuron-specific chromatin remodeling complex (nBAF complex) composed of at least, ARID1A/BAF250A or ARID1B/BAF250B, SMARCD1/BAF60A, SMARCD3/BAF60C, SMARCA2/BRM/BAF190B, SMARCA4/BRG1/BAF190A, SMARCB1/BAF47, SMARCC1/BAF155, SMARCE1/BAF57, SMARCC2/BAF170, DPF1/BAF45B, DPF3/BAF45C, ACTL6B/BAF53B and actin. Component of the SWI/SNF-B (PBAF) chromatin remodeling complex, at least composed of SMARCA4/BRG1, SMARCB1/BAF47/SNF5, ACTL6A/BAF53A or ACTL6B/BAF53B, SMARCE1/BAF57, SMARCD1/BAF60A, SMARCD2/BAF60B, perhaps SMARCD3/BAF60C, SMARCC1/BAF155, SMARCC2/BAF170, PBRM1/BAF180, ARID2/BAF200 and actin (ACTB). Component of SWI/SNF (GBAF) subcomplex, which includes at least BICRA or BICRAL (mutually exclusive), BRD9, SS18, SMARCA2/BRM, SMARCA4/BRG1/BAF190A, ACTL6A/BAF53, SMARCC1/BAF155, and SMARCD1/BAF60A. Specifically interacts with the VDR heterodimer complex. Interacts with ESR1, NR3C1, NR1H4, PGR, SMARCA4, SMARCC1 and SMARCC2. Interacts with DPF2. Interacts with DPF3a (isoform 2 of DPF3/BAF45C) and with HDGFL2 in a DPF3a-dependent manner. Interacts with FOS, FOSB isoform 1 and 2, FOSL1 and FOSL2. As to expression, expressed in all tissues tested, including brain, heart, kidney, liver, lung, muscle, pancreas and placenta.

The protein resides in the nucleus. Involved in transcriptional activation and repression of select genes by chromatin remodeling (alteration of DNA-nucleosome topology). Component of SWI/SNF chromatin remodeling complexes that carry out key enzymatic activities, changing chromatin structure by altering DNA-histone contacts within a nucleosome in an ATP-dependent manner. Belongs to the neural progenitors-specific chromatin remodeling complex (npBAF complex) and the neuron-specific chromatin remodeling complex (nBAF complex). During neural development a switch from a stem/progenitor to a postmitotic chromatin remodeling mechanism occurs as neurons exit the cell cycle and become committed to their adult state. The transition from proliferating neural stem/progenitor cells to postmitotic neurons requires a switch in subunit composition of the npBAF and nBAF complexes. As neural progenitors exit mitosis and differentiate into neurons, npBAF complexes which contain ACTL6A/BAF53A and PHF10/BAF45A, are exchanged for homologous alternative ACTL6B/BAF53B and DPF1/BAF45B or DPF3/BAF45C subunits in neuron-specific complexes (nBAF). The npBAF complex is essential for the self-renewal/proliferative capacity of the multipotent neural stem cells. The nBAF complex along with CREST plays a role regulating the activity of genes essential for dendrite growth. Has a strong influence on vitamin D-mediated transcriptional activity from an enhancer vitamin D receptor element (VDRE). May be a link between mammalian SWI-SNF-like chromatin remodeling complexes and the vitamin D receptor (VDR) heterodimer. Mediates critical interactions between nuclear receptors and the BRG1/SMARCA4 chromatin-remodeling complex for transactivation. Interacts with AKIRIN2. In Homo sapiens (Human), this protein is SWI/SNF-related matrix-associated actin-dependent regulator of chromatin subfamily D member 1.